The sequence spans 557 residues: Polypyrimidine tract-binding protein 1 (557 aa).

Methionine 1 carries the N-acetylmethionine modification. Position 16 is a phosphoserine (serine 16). 3 RRM domains span residues 59–143 (RVIH…SSPN), 184–260 (LRII…FSKL), and 363–437 (SVLL…LSKH). A Glycyl lysine isopeptide (Lys-Gly) (interchain with G-Cter in SUMO2) cross-link involves residue lysine 65. Position 127 is a phosphotyrosine (tyrosine 127). Phosphothreonine is present on threonine 138. At serine 141 the chain carries Phosphoserine. Residue lysine 218 forms a Glycyl lysine isopeptide (Lys-Gly) (interchain with G-Cter in SUMO2) linkage. The residue at position 459 (serine 459) is a Phosphoserine. Residues 480–555 (ATLHLSNIPP…HHLRVSFSKS (76 aa)) form the RRM 4 domain.

In terms of assembly, monomer. Part of a ternary complex containing KHSRP, PTBP1, PTBP2 and HNRPH1. Interacts with RAVER1 and SFPQ.

The protein resides in the nucleus. Functionally, plays a role in pre-mRNA splicing and in the regulation of alternative splicing events. Activates exon skipping of its own pre-mRNA during muscle cell differentiation. Binds to the polypyrimidine tract of introns. May promote RNA looping when bound to two separate polypyrimidine tracts in the same pre-mRNA. May promote the binding of U2 snRNP to pre-mRNA. Cooperates with RAVER1 to modulate switching between mutually exclusive exons during maturation of the TPM1 pre-mRNA. Represses the splicing of MAPT/Tau exon 10. Binds to polypyrimidine-rich controlling element (PCE) of CFTR and promotes exon skipping of CFTR exon 9, thereby antagonizing TIA1 and its role in exon inclusion of CFTR exon 9. Plays a role in the splicing of pyruvate kinase PKM by binding repressively to a polypyrimidine tract flanking PKM exon 9, inhibiting exon 9 inclusion and resulting in exon 10 inclusion and production of the PKM M2 isoform. The chain is Polypyrimidine tract-binding protein 1 (PTBP1) from Sus scrofa (Pig).